Here is a 117-residue protein sequence, read N- to C-terminus: Large ribosomal subunit protein bL20c (117 aa).

The protein belongs to the bacterial ribosomal protein bL20 family.

Its subcellular location is the plastid. It is found in the chloroplast. In terms of biological role, binds directly to 23S ribosomal RNA and is necessary for the in vitro assembly process of the 50S ribosomal subunit. It is not involved in the protein synthesizing functions of that subunit. This Bigelowiella natans (Pedinomonas minutissima) protein is Large ribosomal subunit protein bL20c (rpl20).